The primary structure comprises 720 residues: Mitogen-activated protein kinase 6 (720 aa).

M1 participates in a covalent cross-link: Peptide (Met-Gly) (interchain with G-Cter in ubiquitin). Positions 20-316 (YMDLKPLGCG…AEEALSHPYM (297 aa)) constitute a Protein kinase domain. ATP contacts are provided by residues 26–34 (LGCGGNGLV) and K49. D152 serves as the catalytic Proton acceptor. At S189 the chain carries Phosphoserine; by PAK1, PAK2 and PAK3. The SEG motif motif lies at 189 to 191 (SEG). The FRIEDE motif motif lies at 332 to 337 (FHIEDE). A phosphoserine mark is found at S386, S452, S554, and S556. Residues 638–657 (SEMLETEPVEEGKRGERGRE) are disordered. Positions 647–657 (EEGKRGERGRE) are enriched in basic and acidic residues. At S683 the chain carries Phosphoserine. The span at 698–714 (PSAMKSSPQIPHKTYSN) shows a compositional bias: polar residues. Residues 698–720 (PSAMKSSPQIPHKTYSNILKHLN) form a disordered region.

It belongs to the protein kinase superfamily. CMGC Ser/Thr protein kinase family. MAP kinase subfamily. In terms of assembly, heterodimer with ERK4/MAPK4. Interacts with (via FRIEDE motif) MAPKAPK5. Interacts with UBE3A; this interaction may be indirect and mediated by HERC2, possibly via HERC2 interaction with NEURL4. The cofactor is Mg(2+). Post-translationally, phosphorylated at Ser-189 by PAK1, PAK2 and PAK3 resulting in catalytic activation. Phosphorylated by MAPKAPK5 at other sites. In terms of processing, ubiquitination at Met-1 leads to degradation by the proteasome pathway. Highest levels within the nervous system, expressed in different tissues, mostly in skeletal muscle.

The protein resides in the cytoplasm. Its subcellular location is the nucleus. It catalyses the reaction L-seryl-[protein] + ATP = O-phospho-L-seryl-[protein] + ADP + H(+). The enzyme catalyses L-threonyl-[protein] + ATP = O-phospho-L-threonyl-[protein] + ADP + H(+). With respect to regulation, activated by phosphorylation at Ser-189. Functionally, atypical MAPK protein. Phosphorylates microtubule-associated protein 2 (MAP2) and MAPKAPK5. The precise role of the complex formed with MAPKAPK5 is still unclear, but the complex follows a complex set of phosphorylation events: upon interaction with atypical MAPKAPK5, ERK3/MAPK6 is phosphorylated at Ser-189 and then mediates phosphorylation and activation of MAPKAPK5, which in turn phosphorylates ERK3/MAPK6. May promote entry in the cell cycle. This is Mitogen-activated protein kinase 6 (Mapk6) from Rattus norvegicus (Rat).